A 149-amino-acid polypeptide reads, in one-letter code: Transcriptional repressor NrdR (149 aa).

A zinc finger spans residues 3-34 (CPFCGTQDTKVIDSRLVADGASVRRRRECNHC). Positions 49 to 139 (PRVIKTDGSR…VYRSFEDIRE (91 aa)) constitute an ATP-cone domain.

The protein belongs to the NrdR family. Requires Zn(2+) as cofactor.

Its function is as follows. Negatively regulates transcription of bacterial ribonucleotide reductase nrd genes and operons by binding to NrdR-boxes. This chain is Transcriptional repressor NrdR, found in Idiomarina loihiensis (strain ATCC BAA-735 / DSM 15497 / L2-TR).